The chain runs to 928 residues: DNA ligase 4 (928 aa).

ATP-binding residues include Glu-302, Lys-304, Arg-309, Glu-362, Phe-409, Glu-469, Lys-474, Lys-492, and Lys-494. Lys-304 (N6-AMP-lysine intermediate) is an active-site residue. A Mg(2+)-binding site is contributed by Glu-362. Residue Glu-469 coordinates Mg(2+). BRCT domains are found at residues 673-769 and 821-927; these read VESD…PYFI and PWIY…DYKF.

Belongs to the ATP-dependent DNA ligase family. The cofactor is Mg(2+).

It is found in the nucleus. The catalysed reaction is ATP + (deoxyribonucleotide)n-3'-hydroxyl + 5'-phospho-(deoxyribonucleotide)m = (deoxyribonucleotide)n+m + AMP + diphosphate.. Its function is as follows. DNA ligase involved in DNA non-homologous end joining (NHEJ); required for double-strand break (DSB) repair. Not required for the repair of DSBs induced by ionizing radiation or UV light. Has an important role in morphogenesis, positively affecting the capacity to form hyphae. The sequence is that of DNA ligase 4 (LIG4) from Candida albicans (strain SC5314 / ATCC MYA-2876) (Yeast).